A 187-amino-acid polypeptide reads, in one-letter code: NADH-quinone oxidoreductase subunit B (187 aa).

Residues cysteine 46, cysteine 47, cysteine 112, and cysteine 141 each contribute to the [4Fe-4S] cluster site.

This sequence belongs to the complex I 20 kDa subunit family. In terms of assembly, NDH-1 is composed of 14 different subunits. Subunits NuoB, C, D, E, F, and G constitute the peripheral sector of the complex. Requires [4Fe-4S] cluster as cofactor.

The protein localises to the cell inner membrane. It catalyses the reaction a quinone + NADH + 5 H(+)(in) = a quinol + NAD(+) + 4 H(+)(out). Its function is as follows. NDH-1 shuttles electrons from NADH, via FMN and iron-sulfur (Fe-S) centers, to quinones in the respiratory chain. The immediate electron acceptor for the enzyme in this species is believed to be ubiquinone. Couples the redox reaction to proton translocation (for every two electrons transferred, four hydrogen ions are translocated across the cytoplasmic membrane), and thus conserves the redox energy in a proton gradient. In Myxococcus xanthus (strain DK1622), this protein is NADH-quinone oxidoreductase subunit B.